The following is a 425-amino-acid chain: NAC domain-containing protein 10 (425 aa).

Residues 1-10 (MESPDSSSGS) are compositionally biased toward polar residues. The segment at 1 to 34 (MESPDSSSGSAPPRVLRRQQQQPGSAPELPPGFR) is disordered. Low complexity predominate over residues 12–23 (PPRVLRRQQQQP). The 172-residue stretch at 29 to 200 (LPPGFRFHPT…DWVLCRIYKK (172 aa)) folds into the NAC domain. Residues 129 to 206 (VGVKKALVFY…IYKKTNKAGA (78 aa)) mediate DNA binding.

Highest expression in stamens. Expressed in leaves.

The protein resides in the nucleus. Transcription factor of the NAC family associated with male fertility. Involved in anther development, but not in senescence. Reduced expression of NAC5 via RNAi leads to male-sterility. This is NAC domain-containing protein 10 from Oryza sativa subsp. japonica (Rice).